A 520-amino-acid chain; its full sequence is Glutamate--cysteine ligase (520 aa).

Belongs to the glutamate--cysteine ligase type 1 family. Type 1 subfamily.

It catalyses the reaction L-cysteine + L-glutamate + ATP = gamma-L-glutamyl-L-cysteine + ADP + phosphate + H(+). It participates in sulfur metabolism; glutathione biosynthesis; glutathione from L-cysteine and L-glutamate: step 1/2. This chain is Glutamate--cysteine ligase, found in Leptospira interrogans serogroup Icterohaemorrhagiae serovar copenhageni (strain Fiocruz L1-130).